The sequence spans 327 residues: Probable NAD(P)H-dependent D-xylose reductase xyl1 (327 aa).

The active-site Proton donor is Tyr-57. His-119 is a binding site for substrate. NAD(+)-binding positions include 173-174 (SN), 222-231 (SSLGPQSFIE), and 278-288 (KSNNPDRLAQN).

Belongs to the aldo/keto reductase family.

The enzyme catalyses xylitol + NAD(+) = D-xylose + NADH + H(+). It carries out the reaction xylitol + NADP(+) = D-xylose + NADPH + H(+). It participates in carbohydrate metabolism; D-xylose degradation. Functionally, catalyzes the initial reaction in the xylose utilization pathway by reducing D-xylose into xylitol. Xylose is a major component of hemicelluloses such as xylan. Most fungi utilize D-xylose via three enzymatic reactions, xylose reductase (XR), xylitol dehydrogenase (XDH), and xylulokinase, to form xylulose 5-phosphate, which enters pentose phosphate pathway. This Arthroderma otae (strain ATCC MYA-4605 / CBS 113480) (Microsporum canis) protein is Probable NAD(P)H-dependent D-xylose reductase xyl1 (xyl1).